The sequence spans 197 residues: Probable GTP-binding protein EngB (197 aa).

Positions 2–186 (KVKEVIFAGR…KRDLKQYLLS (185 aa)) constitute an EngB-type G domain. Residues 10–17 (GRSNVGKS), 35–39 (GTTIR), 52–55 (DLPG), 132–135 (NKMD), and 166–168 (VCA) each bind GTP. S17 and T37 together coordinate Mg(2+).

This sequence belongs to the TRAFAC class TrmE-Era-EngA-EngB-Septin-like GTPase superfamily. EngB GTPase family. Mg(2+) is required as a cofactor.

Its function is as follows. Necessary for normal cell division and for the maintenance of normal septation. The protein is Probable GTP-binding protein EngB of Archaeoglobus fulgidus (strain ATCC 49558 / DSM 4304 / JCM 9628 / NBRC 100126 / VC-16).